A 346-amino-acid chain; its full sequence is Methionine import ATP-binding protein MetN (346 aa).

An ABC transporter domain is found at 2–243; that stretch reads VRFEGISKTY…PKHPITQSFL (242 aa). ATP is bound at residue 40-47; that stretch reads GRSGAGKS.

Belongs to the ABC transporter superfamily. Methionine importer (TC 3.A.1.24) family. The complex is composed of two ATP-binding proteins (MetN), two transmembrane proteins (MetI) and a solute-binding protein (MetQ).

The protein resides in the cell inner membrane. The enzyme catalyses L-methionine(out) + ATP + H2O = L-methionine(in) + ADP + phosphate + H(+). It catalyses the reaction D-methionine(out) + ATP + H2O = D-methionine(in) + ADP + phosphate + H(+). Its function is as follows. Part of the ABC transporter complex MetNIQ involved in methionine import. Responsible for energy coupling to the transport system. This Bradyrhizobium diazoefficiens (strain JCM 10833 / BCRC 13528 / IAM 13628 / NBRC 14792 / USDA 110) protein is Methionine import ATP-binding protein MetN.